The sequence spans 237 residues: Phosphoribosylaminoimidazole-succinocarboxamide synthase (237 aa).

Belongs to the SAICAR synthetase family.

The catalysed reaction is 5-amino-1-(5-phospho-D-ribosyl)imidazole-4-carboxylate + L-aspartate + ATP = (2S)-2-[5-amino-1-(5-phospho-beta-D-ribosyl)imidazole-4-carboxamido]succinate + ADP + phosphate + 2 H(+). It functions in the pathway purine metabolism; IMP biosynthesis via de novo pathway; 5-amino-1-(5-phospho-D-ribosyl)imidazole-4-carboxamide from 5-amino-1-(5-phospho-D-ribosyl)imidazole-4-carboxylate: step 1/2. The protein is Phosphoribosylaminoimidazole-succinocarboxamide synthase of Listeria monocytogenes serotype 4a (strain HCC23).